We begin with the raw amino-acid sequence, 794 residues long: Lon protease (794 aa).

The 192-residue stretch at valine 13–valine 204 folds into the Lon N-terminal domain. Glycine 356–threonine 363 contacts ATP. In terms of domain architecture, Lon proteolytic spans lysine 592–proline 773. Catalysis depends on residues serine 679 and lysine 722. Residues threonine 774–alanine 788 show a composition bias toward low complexity. The tract at residues threonine 774 to glutamine 794 is disordered.

The protein belongs to the peptidase S16 family. Homohexamer. Organized in a ring with a central cavity.

Its subcellular location is the cytoplasm. The catalysed reaction is Hydrolysis of proteins in presence of ATP.. ATP-dependent serine protease that mediates the selective degradation of mutant and abnormal proteins as well as certain short-lived regulatory proteins. Required for cellular homeostasis and for survival from DNA damage and developmental changes induced by stress. Degrades polypeptides processively to yield small peptide fragments that are 5 to 10 amino acids long. Binds to DNA in a double-stranded, site-specific manner. This chain is Lon protease, found in Citrifermentans bemidjiense (strain ATCC BAA-1014 / DSM 16622 / JCM 12645 / Bem) (Geobacter bemidjiensis).